A 343-amino-acid chain; its full sequence is N-acetyl-gamma-glutamyl-phosphate reductase (343 aa).

The active site involves C149.

Belongs to the NAGSA dehydrogenase family. Type 1 subfamily.

The protein localises to the cytoplasm. It catalyses the reaction N-acetyl-L-glutamate 5-semialdehyde + phosphate + NADP(+) = N-acetyl-L-glutamyl 5-phosphate + NADPH + H(+). It functions in the pathway amino-acid biosynthesis; L-arginine biosynthesis; N(2)-acetyl-L-ornithine from L-glutamate: step 3/4. Functionally, catalyzes the NADPH-dependent reduction of N-acetyl-5-glutamyl phosphate to yield N-acetyl-L-glutamate 5-semialdehyde. This Alkalilimnicola ehrlichii (strain ATCC BAA-1101 / DSM 17681 / MLHE-1) protein is N-acetyl-gamma-glutamyl-phosphate reductase.